The chain runs to 322 residues: Ribosomal RNA small subunit methyltransferase H (322 aa).

S-adenosyl-L-methionine contacts are provided by residues 40 to 42 (GGH), D60, F84, D106, and Q113.

It belongs to the methyltransferase superfamily. RsmH family.

It is found in the cytoplasm. It carries out the reaction cytidine(1402) in 16S rRNA + S-adenosyl-L-methionine = N(4)-methylcytidine(1402) in 16S rRNA + S-adenosyl-L-homocysteine + H(+). Specifically methylates the N4 position of cytidine in position 1402 (C1402) of 16S rRNA. The chain is Ribosomal RNA small subunit methyltransferase H from Aggregatibacter aphrophilus (strain NJ8700) (Haemophilus aphrophilus).